We begin with the raw amino-acid sequence, 279 residues long: Diaminopimelate epimerase (279 aa).

Residues asparagine 13 and asparagine 66 each contribute to the substrate site. The active-site Proton donor is the cysteine 75. Residues 76-77 (GN), asparagine 164, asparagine 197, and 215-216 (ER) each bind substrate. The Proton acceptor role is filled by cysteine 224. 225-226 (GT) is a substrate binding site.

Belongs to the diaminopimelate epimerase family. Homodimer.

The protein localises to the cytoplasm. It catalyses the reaction (2S,6S)-2,6-diaminopimelate = meso-2,6-diaminopimelate. It participates in amino-acid biosynthesis; L-lysine biosynthesis via DAP pathway; DL-2,6-diaminopimelate from LL-2,6-diaminopimelate: step 1/1. Its function is as follows. Catalyzes the stereoinversion of LL-2,6-diaminopimelate (L,L-DAP) to meso-diaminopimelate (meso-DAP), a precursor of L-lysine and an essential component of the bacterial peptidoglycan. The polypeptide is Diaminopimelate epimerase (Nostoc punctiforme (strain ATCC 29133 / PCC 73102)).